The sequence spans 380 residues: MASLRKIHPLMKITNDMVIDLPAPSNISVWWNFGSLLGLCLFSQILTGLFLAMHYTSDISTAFSSVVHTCRDVNYGWFIRSLHANGASFFFICIYLHIARGLYYGSYLYKETWTIGVVLLGLVMATAFVGYVLPWGQMSFWGATVITNLLSAIPYVGGTLVQWIWGGFSVDNATLTRFFTFHFLLPFIIAAATLVHLLFLHETGSNNPTGLNSDADKVSFHPYFSYKDLLGFLALLSALTSLALFSPNLLGDPDNFIPANPLVTPPHIKPEWYFLFAYAILRSIPNKLGGVLALLFSILVLVLVPILHTSKQRGLMFRPLTQTLFWTLVADMLILTWIGGMPVEYPFVIIGQVASTLYFLLFLVLAPTAGWLENKSLKWL.

Helical transmembrane passes span 33–53 (FGSLLGLCLFSQILTGLFLAM), 77–98 (WFIRSLHANGASFFFICIYLHI), 113–133 (WTIGVVLLGLVMATAFVGYVL), and 178–198 (FFTFHFLLPFIIAAATLVHLL). 2 residues coordinate heme b: His-83 and His-97. 2 residues coordinate heme b: His-182 and His-196. His-201 serves as a coordination point for a ubiquinone. 4 helical membrane-spanning segments follow: residues 226-246 (YKDLLGFLALLSALTSLALFS), 288-308 (LGGVLALLFSILVLVLVPILH), 320-340 (LTQTLFWTLVADMLILTWIGG), and 347-367 (FVIIGQVASTLYFLLFLVLAP).

The protein belongs to the cytochrome b family. As to quaternary structure, the cytochrome bc1 complex contains 3 respiratory subunits (MT-CYB, CYC1 and UQCRFS1), 2 core proteins (UQCRC1 and UQCRC2) and probably 6 low-molecular weight proteins. Heme b serves as cofactor.

It localises to the mitochondrion inner membrane. Functionally, component of the ubiquinol-cytochrome c reductase complex (complex III or cytochrome b-c1 complex) that is part of the mitochondrial respiratory chain. The b-c1 complex mediates electron transfer from ubiquinol to cytochrome c. Contributes to the generation of a proton gradient across the mitochondrial membrane that is then used for ATP synthesis. This is Cytochrome b (mt-cyb) from Lampris guttatus (Opah).